The primary structure comprises 188 residues: Ribosome-recycling factor (188 aa).

Belongs to the RRF family.

It localises to the cytoplasm. Functionally, responsible for the release of ribosomes from messenger RNA at the termination of protein biosynthesis. May increase the efficiency of translation by recycling ribosomes from one round of translation to another. In Cereibacter sphaeroides (strain ATCC 17029 / ATH 2.4.9) (Rhodobacter sphaeroides), this protein is Ribosome-recycling factor.